We begin with the raw amino-acid sequence, 155 residues long: NADPH-dependent 7-cyano-7-deazaguanine reductase (155 aa).

Cys53 (thioimide intermediate) is an active-site residue. Residue Asp60 is the Proton donor of the active site. Residues 75 to 77 (VES) and 94 to 95 (HE) each bind substrate.

It belongs to the GTP cyclohydrolase I family. QueF type 1 subfamily.

Its subcellular location is the cytoplasm. The enzyme catalyses 7-aminomethyl-7-carbaguanine + 2 NADP(+) = 7-cyano-7-deazaguanine + 2 NADPH + 3 H(+). Its pathway is tRNA modification; tRNA-queuosine biosynthesis. In terms of biological role, catalyzes the NADPH-dependent reduction of 7-cyano-7-deazaguanine (preQ0) to 7-aminomethyl-7-deazaguanine (preQ1). This chain is NADPH-dependent 7-cyano-7-deazaguanine reductase, found in Brucella suis (strain ATCC 23445 / NCTC 10510).